The primary structure comprises 417 residues: Serine hydroxymethyltransferase 2 (417 aa).

(6S)-5,6,7,8-tetrahydrofolate is bound by residues L121 and 125-127 (GHL). K229 is subject to N6-(pyridoxal phosphate)lysine. A (6S)-5,6,7,8-tetrahydrofolate-binding site is contributed by 354-356 (SPF).

This sequence belongs to the SHMT family. As to quaternary structure, homodimer. Pyridoxal 5'-phosphate serves as cofactor.

It is found in the cytoplasm. It catalyses the reaction (6R)-5,10-methylene-5,6,7,8-tetrahydrofolate + glycine + H2O = (6S)-5,6,7,8-tetrahydrofolate + L-serine. The protein operates within one-carbon metabolism; tetrahydrofolate interconversion. It participates in amino-acid biosynthesis; glycine biosynthesis; glycine from L-serine: step 1/1. Its function is as follows. Catalyzes the reversible interconversion of serine and glycine with tetrahydrofolate (THF) serving as the one-carbon carrier. This reaction serves as the major source of one-carbon groups required for the biosynthesis of purines, thymidylate, methionine, and other important biomolecules. Also exhibits THF-independent aldolase activity toward beta-hydroxyamino acids, producing glycine and aldehydes, via a retro-aldol mechanism. In Pseudomonas putida (strain ATCC 47054 / DSM 6125 / CFBP 8728 / NCIMB 11950 / KT2440), this protein is Serine hydroxymethyltransferase 2.